A 254-amino-acid chain; its full sequence is tRNA (guanine-N(1)-)-methyltransferase (254 aa).

S-adenosyl-L-methionine contacts are provided by residues G112 and 131–136; that span reads IGDFIL.

This sequence belongs to the RNA methyltransferase TrmD family. As to quaternary structure, homodimer.

It localises to the cytoplasm. It catalyses the reaction guanosine(37) in tRNA + S-adenosyl-L-methionine = N(1)-methylguanosine(37) in tRNA + S-adenosyl-L-homocysteine + H(+). In terms of biological role, specifically methylates guanosine-37 in various tRNAs. This is tRNA (guanine-N(1)-)-methyltransferase from Persephonella marina (strain DSM 14350 / EX-H1).